Consider the following 156-residue polypeptide: Cyanate hydratase (156 aa).

Residues R96, E99, and S122 contribute to the active site.

Belongs to the cyanase family.

The enzyme catalyses cyanate + hydrogencarbonate + 3 H(+) = NH4(+) + 2 CO2. In terms of biological role, catalyzes the reaction of cyanate with bicarbonate to produce ammonia and carbon dioxide. This is Cyanate hydratase from Burkholderia vietnamiensis (strain G4 / LMG 22486) (Burkholderia cepacia (strain R1808)).